The following is a 563-amino-acid chain: Sulfite reductase [NADPH] hemoprotein beta-component (563 aa).

The [4Fe-4S] cluster site is built by C426, C432, C472, and C476. C476 serves as a coordination point for siroheme.

Belongs to the nitrite and sulfite reductase 4Fe-4S domain family. Alpha(8)-beta(8). The alpha component is a flavoprotein, the beta component is a hemoprotein. Requires siroheme as cofactor. [4Fe-4S] cluster serves as cofactor.

The catalysed reaction is hydrogen sulfide + 3 NADP(+) + 3 H2O = sulfite + 3 NADPH + 4 H(+). The protein operates within sulfur metabolism; hydrogen sulfide biosynthesis; hydrogen sulfide from sulfite (NADPH route): step 1/1. In terms of biological role, component of the sulfite reductase complex that catalyzes the 6-electron reduction of sulfite to sulfide. This is one of several activities required for the biosynthesis of L-cysteine from sulfate. This Photobacterium profundum (strain SS9) protein is Sulfite reductase [NADPH] hemoprotein beta-component.